The chain runs to 311 residues: Bifunctional protein FolD (311 aa).

Gly-174 to Gly-176 contributes to the NADP(+) binding site.

It belongs to the tetrahydrofolate dehydrogenase/cyclohydrolase family. Homodimer.

It catalyses the reaction (6R)-5,10-methylene-5,6,7,8-tetrahydrofolate + NADP(+) = (6R)-5,10-methenyltetrahydrofolate + NADPH. The catalysed reaction is (6R)-5,10-methenyltetrahydrofolate + H2O = (6R)-10-formyltetrahydrofolate + H(+). It participates in one-carbon metabolism; tetrahydrofolate interconversion. In terms of biological role, catalyzes the oxidation of 5,10-methylenetetrahydrofolate to 5,10-methenyltetrahydrofolate and then the hydrolysis of 5,10-methenyltetrahydrofolate to 10-formyltetrahydrofolate. In Pyrobaculum arsenaticum (strain DSM 13514 / JCM 11321 / PZ6), this protein is Bifunctional protein FolD.